Consider the following 896-residue polypeptide: Alanine--tRNA ligase (896 aa).

Zn(2+) contacts are provided by H574, H578, C677, and H681.

The protein belongs to the class-II aminoacyl-tRNA synthetase family. Zn(2+) serves as cofactor.

Its subcellular location is the cytoplasm. The enzyme catalyses tRNA(Ala) + L-alanine + ATP = L-alanyl-tRNA(Ala) + AMP + diphosphate. Its function is as follows. Catalyzes the attachment of alanine to tRNA(Ala) in a two-step reaction: alanine is first activated by ATP to form Ala-AMP and then transferred to the acceptor end of tRNA(Ala). Also edits incorrectly charged Ser-tRNA(Ala) and Gly-tRNA(Ala) via its editing domain. The polypeptide is Alanine--tRNA ligase (Mycoplasma capricolum subsp. capricolum (strain California kid / ATCC 27343 / NCTC 10154)).